Reading from the N-terminus, the 323-residue chain is tRNA dimethylallyltransferase (323 aa).

Position 12 to 19 (12 to 19 (GPTAAGKT)) interacts with ATP. 14-19 (TAAGKT) provides a ligand contact to substrate. 2 interaction with substrate tRNA regions span residues 37–40 (DSAL) and 161–165 (QRLSR).

This sequence belongs to the IPP transferase family. Monomer. It depends on Mg(2+) as a cofactor.

It catalyses the reaction adenosine(37) in tRNA + dimethylallyl diphosphate = N(6)-dimethylallyladenosine(37) in tRNA + diphosphate. Functionally, catalyzes the transfer of a dimethylallyl group onto the adenine at position 37 in tRNAs that read codons beginning with uridine, leading to the formation of N6-(dimethylallyl)adenosine (i(6)A). In Pseudomonas fluorescens (strain Pf0-1), this protein is tRNA dimethylallyltransferase.